The primary structure comprises 247 residues: MMNESQPKLKYKRILLKFSGEALMGKSQFGIDPSVLDSLARDIAELIHMGVEVGLVLGGGNLFRGKALSQAGVGRVTGDHMGMLATVMNALALRDALERIDLPARIMSAIPMLGVVDPYHRRKAITHLRNGQVVIFAAGTGNPFFTTDTAACLRAIEIGADIVLKATKVDGVYSADPLKNSDAKRYDYLTYKEVLTKGLEVMDSTAICLCQDQGMPLQVFDMAAPKALKRIVTGERVGTIVGANHDQ.

17 to 20 contributes to the ATP binding site; sequence KFSG. A UMP-binding site is contributed by Gly-59. Residues Gly-60 and Arg-64 each coordinate ATP. UMP-binding positions include Asp-79 and 140-147; that span reads TGNPFFTT. 3 residues coordinate ATP: Thr-167, Tyr-173, and Asp-176.

It belongs to the UMP kinase family. Homohexamer.

The protein localises to the cytoplasm. The enzyme catalyses UMP + ATP = UDP + ADP. The protein operates within pyrimidine metabolism; CTP biosynthesis via de novo pathway; UDP from UMP (UMPK route): step 1/1. Inhibited by UTP. Its function is as follows. Catalyzes the reversible phosphorylation of UMP to UDP. The chain is Uridylate kinase from Legionella pneumophila subsp. pneumophila (strain Philadelphia 1 / ATCC 33152 / DSM 7513).